Here is a 388-residue protein sequence, read N- to C-terminus: Chorismate synthase (388 aa).

NADP(+) contacts are provided by R39 and R45. The interval 95–118 is disordered; it reads EKNEKSRRVSRPRPGHADLVGGMK. Residues 130 to 132, 251 to 252, G296, 311 to 315, and R337 contribute to the FMN site; these read RSS, NA, and KPIPT.

Belongs to the chorismate synthase family. Homotetramer. The cofactor is FMNH2.

The catalysed reaction is 5-O-(1-carboxyvinyl)-3-phosphoshikimate = chorismate + phosphate. Its pathway is metabolic intermediate biosynthesis; chorismate biosynthesis; chorismate from D-erythrose 4-phosphate and phosphoenolpyruvate: step 7/7. Functionally, catalyzes the anti-1,4-elimination of the C-3 phosphate and the C-6 proR hydrogen from 5-enolpyruvylshikimate-3-phosphate (EPSP) to yield chorismate, which is the branch point compound that serves as the starting substrate for the three terminal pathways of aromatic amino acid biosynthesis. This reaction introduces a second double bond into the aromatic ring system. The sequence is that of Chorismate synthase from Listeria innocua serovar 6a (strain ATCC BAA-680 / CLIP 11262).